A 296-amino-acid chain; its full sequence is Glycine N-acyltransferase-like protein (296 aa).

Lys-41 carries the N6-acetyllysine; alternate modification. The residue at position 41 (Lys-41) is an N6-succinyllysine; alternate. Lys-43 carries the post-translational modification N6-acetyllysine. An N6-acetyllysine; alternate modification is found at Lys-48. Lys-48 carries the N6-succinyllysine; alternate modification. N6-acetyllysine occurs at positions 80 and 83. N6-acetyllysine; alternate is present on residues Lys-183 and Lys-256. 2 positions are modified to N6-succinyllysine; alternate: Lys-183 and Lys-256.

Belongs to the glycine N-acyltransferase family.

Its subcellular location is the mitochondrion. The enzyme catalyses an acyl-CoA + glycine = an N-acylglycine + CoA + H(+). Its function is as follows. Mitochondrial acyltransferase which transfers the acyl group to the N-terminus of glycine. Can conjugate a multitude of substrates to form a variety of N-acylglycines. This is Glycine N-acyltransferase-like protein (Gm4952) from Mus musculus (Mouse).